Here is a 408-residue protein sequence, read N- to C-terminus: Echinulin prenyltransferase 2 (408 aa).

10 residues coordinate dimethylallyl diphosphate: R94, K181, Y183, R248, K250, Y252, Q334, Y336, Y400, and Y404.

Belongs to the tryptophan dimethylallyltransferase family.

The enzyme catalyses preechinulin + dimethylallyl diphosphate = tardioxopiperazine B + diphosphate. The catalysed reaction is preechinulin + dimethylallyl diphosphate = tardioxopiperazine A + diphosphate. It catalyses the reaction tardioxopiperazine A + dimethylallyl diphosphate = echinulin + diphosphate. It carries out the reaction tardioxopiperazine A + dimethylallyl diphosphate = variecolorin L + diphosphate. The enzyme catalyses neoechinulin A + dimethylallyl diphosphate = variecolorin G + diphosphate. The catalysed reaction is neoechinulin A + dimethylallyl diphosphate = isoechinulin A + diphosphate. It catalyses the reaction isoechinulin A + dimethylallyl diphosphate = dehydroechinulin + diphosphate. It carries out the reaction neoechinulin B + dimethylallyl diphosphate = isoechinulin B + diphosphate. It participates in secondary metabolite biosynthesis. The protein operates within alkaloid biosynthesis. Functionally, prenyltransferase; part of the gene cluster that mediates the biosynthesis of echinulin family alkaloid. The pathway begins with the biosynthesis of the cyclic dipeptide cyclo-L-Trp-L-Ala (cyclo-TA) by the NRPS echPS via condensation of L-alanine and L-tryptophan. The prenyltransferase echPT1 then catalyzes the first prenylation step, a reverse prenylation reaction at C2, to yield preechinulin. Preechinulin is the substrate of the cytochrome P450 monooxygenase echP450 that catalyzes the formation of the double bond between C10 and C11 to produce neoechulin A. The unique prenyltransferase echPT2 functions as a competitive enzyme with echP450 for preechinulin metabolization and uses preechinulin for effective regiospecific prenylations. Preechinulin is prenylated by echPT2 at C5 or C7. C7-prenylation leads to accumulation of tardioxopiperazine B without further modification by echPT2. In contrast, the C5-prenylated tardioxopiperazine A can be prenylated again by echPT2, predominantly at C7 to form echinulin or less frequently at C4 to give variecolorin L. EchPT2 also accepts neoechilunin A to produce varlecolorin G (prenylation at C5) or isoechinulin A (prenylation at C7). EchPT2 further converts isoechinulin A into dehydroechinulin. Moreover, a yet unidentified enzyme can also convert neoechilunin A into neoechilunin B by introducing a double bond between positions C14 and C17 and thus provides a further substrate to echPT2 for C5 and C7 prenylation. The polypeptide is Echinulin prenyltransferase 2 (Aspergillus ruber (Eurotium rubrum)).